Here is a 555-residue protein sequence, read N- to C-terminus: Potassium-transporting ATPase potassium-binding subunit (555 aa).

Helical transmembrane passes span 2–22, 60–80, 130–150, 173–193, 246–266, 278–298, 374–394, 412–432, 483–503, and 525–545; these read IWVAVVITMLLFILVAKPTGI, QYALSLVLLNGFMIVVVYFIF, IGITFLMFAAPATTLALVMAF, VFLPIAFMAALVFVALGVPQT, MSNILQMMLMMLLPTALPFTY, ILFVSLFMVFLLGFITITTSE, AGFVNIIMYAIIAVFISGLMV, LIAVTILFHPLLILGFSALAL, LVMFLGRYFSLITMLAVAASL, and GIFIGTIVIVGALTFFPMLVL.

The protein belongs to the KdpA family. As to quaternary structure, the system is composed of three essential subunits: KdpA, KdpB and KdpC.

Its subcellular location is the cell membrane. Functionally, part of the high-affinity ATP-driven potassium transport (or Kdp) system, which catalyzes the hydrolysis of ATP coupled with the electrogenic transport of potassium into the cytoplasm. This subunit binds the extracellular potassium ions and delivers the ions to the membrane domain of KdpB through an intramembrane tunnel. The sequence is that of Potassium-transporting ATPase potassium-binding subunit from Bacillus anthracis (strain A0248).